The primary structure comprises 157 residues: D-aminoacyl-tRNA deacylase (157 aa).

The short motif at 137–138 (GP) is the Gly-cisPro motif, important for rejection of L-amino acids element.

Belongs to the DTD family. In terms of assembly, homodimer.

It localises to the cytoplasm. The catalysed reaction is glycyl-tRNA(Ala) + H2O = tRNA(Ala) + glycine + H(+). It catalyses the reaction a D-aminoacyl-tRNA + H2O = a tRNA + a D-alpha-amino acid + H(+). Its function is as follows. An aminoacyl-tRNA editing enzyme that deacylates mischarged D-aminoacyl-tRNAs. Also deacylates mischarged glycyl-tRNA(Ala), protecting cells against glycine mischarging by AlaRS. Acts via tRNA-based rather than protein-based catalysis; rejects L-amino acids rather than detecting D-amino acids in the active site. By recycling D-aminoacyl-tRNA to D-amino acids and free tRNA molecules, this enzyme counteracts the toxicity associated with the formation of D-aminoacyl-tRNA entities in vivo and helps enforce protein L-homochirality. The protein is D-aminoacyl-tRNA deacylase of Roseiflexus castenholzii (strain DSM 13941 / HLO8).